The primary structure comprises 457 residues: tRNA-2-methylthio-N(6)-dimethylallyladenosine synthase (457 aa).

An MTTase N-terminal domain is found at 3-120 (KKVYVKTFGC…LPQMIDARRE (118 aa)). [4Fe-4S] cluster-binding residues include Cys12, Cys49, Cys83, Cys157, Cys161, and Cys164. A Radical SAM core domain is found at 143–377 (RVEGPSAFVS…QATIEENVAR (235 aa)). The region spanning 380–447 (QSMLGKVERI…PHSLRGELVL (68 aa)) is the TRAM domain.

This sequence belongs to the methylthiotransferase family. MiaB subfamily. As to quaternary structure, monomer. Requires [4Fe-4S] cluster as cofactor.

It is found in the cytoplasm. It carries out the reaction N(6)-dimethylallyladenosine(37) in tRNA + (sulfur carrier)-SH + AH2 + 2 S-adenosyl-L-methionine = 2-methylsulfanyl-N(6)-dimethylallyladenosine(37) in tRNA + (sulfur carrier)-H + 5'-deoxyadenosine + L-methionine + A + S-adenosyl-L-homocysteine + 2 H(+). Catalyzes the methylthiolation of N6-(dimethylallyl)adenosine (i(6)A), leading to the formation of 2-methylthio-N6-(dimethylallyl)adenosine (ms(2)i(6)A) at position 37 in tRNAs that read codons beginning with uridine. The polypeptide is tRNA-2-methylthio-N(6)-dimethylallyladenosine synthase (Burkholderia pseudomallei (strain 1710b)).